The chain runs to 295 residues: UDP-N-acetylenolpyruvoylglucosamine reductase (295 aa).

Residues 23-188 (KVGGPADFLA…ISAKFALKPG (166 aa)) form the FAD-binding PCMH-type domain. Arg-167 is a catalytic residue. The active-site Proton donor is the Ser-217. Glu-287 is a catalytic residue.

The protein belongs to the MurB family. The cofactor is FAD.

The protein localises to the cytoplasm. It carries out the reaction UDP-N-acetyl-alpha-D-muramate + NADP(+) = UDP-N-acetyl-3-O-(1-carboxyvinyl)-alpha-D-glucosamine + NADPH + H(+). Its pathway is cell wall biogenesis; peptidoglycan biosynthesis. In terms of biological role, cell wall formation. This Streptococcus pyogenes serotype M12 (strain MGAS9429) protein is UDP-N-acetylenolpyruvoylglucosamine reductase.